The sequence spans 795 residues: MKKLLIASLLFGTTTTVFAAPFVAKDIRVDGVQGDLEQQIRASLPVRAGQRVTDNDVANIVRSLFVSGRFDDVKAHQEGDVLVVSVVAKSIISDVKIKGNSIIPTEALKQNLDANGFKVGDVLIREKLNEFAKSVKEHYASVGRYNATVEPIVNTLPNNRAEILIQINEDDKAKLASLTFKGNESVSSSTLQEQMELQPDSWWKLWGNKFEGAQFEKDLQSIRDYYLNNGYAKAQITKTDVQLNDEKTKVNVTIDVNEGLQYDLRSARIIGNLGGMSAELEPLLSALHLNDTFRRSDIADVENAIKAKLGERGYGSATVNSVPDFDDANKTLAITLVVDAGRRLTVRQLRFEGNTVSADSTLRQEMRQQEGTWYNSQLVELGKIRLDRTGFFETVENRIDPINGSNDEVDVVYKVKERNTGSINFGIGYGTESGISYQASVKQDNFLGTGAAVSIAGTKNDYGTSVNLGYTEPYFTKDGVSLGGNVFFENYDNSKSDTSSNYKRTTYGSNVTLGFPVNENNSYYVGLGHTYNKISNFALEYNRNLYIQSMKFKGNGIKTNDFDFSFGWNYNSLNRGYFPTKGVKASLGGRVTIPGSDNKYYKLSADVQGFYPLDRDHLWVVSAKASAGYANGFGNKRLPFYQTYTAGGIGSLRGFAYGSIGPNAIYAEHGNGNGTFKKISSDVIGGNAITTASAELIVPTPFVSDKSQNTVRTSLFVDAASVWNTKWKSDKSGLDNNVLKSLPDYGKSSRIRASTGVGFQWQSPIGPLVFSYAKPIKKYENDDVEQFQFSIGGSF.

The first 19 residues, 1–19 (MKKLLIASLLFGTTTTVFA), serve as a signal peptide directing secretion. 5 POTRA domains span residues 22–89 (FVAK…VVAK), 90–170 (SIIS…INED), 173–259 (AKLA…VNEG), 262–341 (YDLR…VDAG), and 344–418 (LTVR…VKER).

This sequence belongs to the BamA family. Part of the Bam complex.

The protein localises to the cell outer membrane. Functionally, part of the outer membrane protein assembly complex, which is involved in assembly and insertion of beta-barrel proteins into the outer membrane. In Haemophilus influenzae (strain ATCC 51907 / DSM 11121 / KW20 / Rd), this protein is Outer membrane protein assembly factor BamA.